Consider the following 200-residue polypeptide: Holliday junction branch migration complex subunit RuvA (200 aa).

A domain I region spans residues 1-64; the sequence is MIAKLKGLLD…ENDMRLLGFA (64 aa). The segment at 65 to 143 is domain II; that stretch reads EASERDWFRL…ALPSAPGGAA (79 aa). The interval 144–154 is flexible linker; that stretch reads MAANPAGGASA. The tract at residues 154-200 is domain III; it reads ADAVSALENLGFKPAIAARAVATAQGELGEGASESELIRVALKRAAG.

Belongs to the RuvA family. Homotetramer. Forms an RuvA(8)-RuvB(12)-Holliday junction (HJ) complex. HJ DNA is sandwiched between 2 RuvA tetramers; dsDNA enters through RuvA and exits via RuvB. An RuvB hexamer assembles on each DNA strand where it exits the tetramer. Each RuvB hexamer is contacted by two RuvA subunits (via domain III) on 2 adjacent RuvB subunits; this complex drives branch migration. In the full resolvosome a probable DNA-RuvA(4)-RuvB(12)-RuvC(2) complex forms which resolves the HJ.

The protein resides in the cytoplasm. Functionally, the RuvA-RuvB-RuvC complex processes Holliday junction (HJ) DNA during genetic recombination and DNA repair, while the RuvA-RuvB complex plays an important role in the rescue of blocked DNA replication forks via replication fork reversal (RFR). RuvA specifically binds to HJ cruciform DNA, conferring on it an open structure. The RuvB hexamer acts as an ATP-dependent pump, pulling dsDNA into and through the RuvAB complex. HJ branch migration allows RuvC to scan DNA until it finds its consensus sequence, where it cleaves and resolves the cruciform DNA. The sequence is that of Holliday junction branch migration complex subunit RuvA from Erythrobacter litoralis (strain HTCC2594).